Consider the following 309-residue polypeptide: Homoserine kinase (309 aa).

91-101 serves as a coordination point for ATP; the sequence is PIGSGLGSSAC.

This sequence belongs to the GHMP kinase family. Homoserine kinase subfamily.

Its subcellular location is the cytoplasm. The enzyme catalyses L-homoserine + ATP = O-phospho-L-homoserine + ADP + H(+). Its pathway is amino-acid biosynthesis; L-threonine biosynthesis; L-threonine from L-aspartate: step 4/5. Functionally, catalyzes the ATP-dependent phosphorylation of L-homoserine to L-homoserine phosphate. The polypeptide is Homoserine kinase (Escherichia fergusonii (strain ATCC 35469 / DSM 13698 / CCUG 18766 / IAM 14443 / JCM 21226 / LMG 7866 / NBRC 102419 / NCTC 12128 / CDC 0568-73)).